We begin with the raw amino-acid sequence, 237 residues long: Phosphoribosylaminoimidazole-succinocarboxamide synthase (237 aa).

This sequence belongs to the SAICAR synthetase family.

It carries out the reaction 5-amino-1-(5-phospho-D-ribosyl)imidazole-4-carboxylate + L-aspartate + ATP = (2S)-2-[5-amino-1-(5-phospho-beta-D-ribosyl)imidazole-4-carboxamido]succinate + ADP + phosphate + 2 H(+). Its pathway is purine metabolism; IMP biosynthesis via de novo pathway; 5-amino-1-(5-phospho-D-ribosyl)imidazole-4-carboxamide from 5-amino-1-(5-phospho-D-ribosyl)imidazole-4-carboxylate: step 1/2. This Alteromonas mediterranea (strain DSM 17117 / CIP 110805 / LMG 28347 / Deep ecotype) protein is Phosphoribosylaminoimidazole-succinocarboxamide synthase.